A 292-amino-acid chain; its full sequence is Acetyl-coenzyme A carboxylase carboxyl transferase subunit beta (292 aa).

The CoA carboxyltransferase N-terminal domain occupies 29–292 (LWSKCPECGQ…HGCLQGSAAV (264 aa)). The Zn(2+) site is built by Cys-33, Cys-36, Cys-52, and Cys-55. Residues 33–55 (CPECGQVVYRKDLLANASVCSNC) form a C4-type zinc finger.

It belongs to the AccD/PCCB family. In terms of assembly, acetyl-CoA carboxylase is a heterohexamer composed of biotin carboxyl carrier protein (AccB), biotin carboxylase (AccC) and two subunits each of ACCase subunit alpha (AccA) and ACCase subunit beta (AccD). Zn(2+) is required as a cofactor.

The protein resides in the cytoplasm. It catalyses the reaction N(6)-carboxybiotinyl-L-lysyl-[protein] + acetyl-CoA = N(6)-biotinyl-L-lysyl-[protein] + malonyl-CoA. It participates in lipid metabolism; malonyl-CoA biosynthesis; malonyl-CoA from acetyl-CoA: step 1/1. Its function is as follows. Component of the acetyl coenzyme A carboxylase (ACC) complex. Biotin carboxylase (BC) catalyzes the carboxylation of biotin on its carrier protein (BCCP) and then the CO(2) group is transferred by the transcarboxylase to acetyl-CoA to form malonyl-CoA. The chain is Acetyl-coenzyme A carboxylase carboxyl transferase subunit beta from Synechococcus sp. (strain WH7803).